A 291-amino-acid polypeptide reads, in one-letter code: 33 kDa chaperonin (291 aa).

2 disulfides stabilise this stretch: Cys-229–Cys-231 and Cys-262–Cys-265.

The protein belongs to the HSP33 family. Post-translationally, under oxidizing conditions two disulfide bonds are formed involving the reactive cysteines. Under reducing conditions zinc is bound to the reactive cysteines and the protein is inactive.

It is found in the cytoplasm. Its function is as follows. Redox regulated molecular chaperone. Protects both thermally unfolding and oxidatively damaged proteins from irreversible aggregation. Plays an important role in the bacterial defense system toward oxidative stress. This is 33 kDa chaperonin from Aliivibrio fischeri (strain ATCC 700601 / ES114) (Vibrio fischeri).